Reading from the N-terminus, the 315-residue chain is Methionyl-tRNA formyltransferase (315 aa).

Position 113-116 (113-116 (SLLP)) interacts with (6S)-5,6,7,8-tetrahydrofolate.

The protein belongs to the Fmt family.

The catalysed reaction is L-methionyl-tRNA(fMet) + (6R)-10-formyltetrahydrofolate = N-formyl-L-methionyl-tRNA(fMet) + (6S)-5,6,7,8-tetrahydrofolate + H(+). Its function is as follows. Attaches a formyl group to the free amino group of methionyl-tRNA(fMet). The formyl group appears to play a dual role in the initiator identity of N-formylmethionyl-tRNA by promoting its recognition by IF2 and preventing the misappropriation of this tRNA by the elongation apparatus. In Escherichia coli O45:K1 (strain S88 / ExPEC), this protein is Methionyl-tRNA formyltransferase.